The following is a 181-amino-acid chain: ADP-ribosylation factor 1 (181 aa).

The N-myristoyl glycine moiety is linked to residue Gly2. GTP contacts are provided by residues 25–32 (LDGAGKTT), Thr48, Gly70, 126–129 (NKQD), and 160–161 (AT). A Glycyl lysine isopeptide (Lys-Gly) (interchain with G-Cter in ubiquitin) cross-link involves residue Lys127.

Belongs to the small GTPase superfamily. Arf family. In terms of assembly, interacts with RUD3. Interacts with VPS13 (via C-terminal part); the interaction is direct.

Its subcellular location is the golgi apparatus. It carries out the reaction GTP + H2O = GDP + phosphate + H(+). Functionally, GTP-binding protein involved in Golgi vesicle trafficking. May modulate vesicle budding and uncoating within the Golgi apparatus. May recruit the lipid transfer protein VPS13 to Golgi membranes. Recruits polyadenylate-binding protein PAB1 to COPI vesicles, and this is required for correct localization of the asymmetrically distributed ASH1 mRNA. This Saccharomyces cerevisiae (strain ATCC 204508 / S288c) (Baker's yeast) protein is ADP-ribosylation factor 1 (ARF1).